The following is a 507-amino-acid chain: ATP synthase subunit alpha (507 aa).

170–177 (GDRQTGKT) serves as a coordination point for ATP.

It belongs to the ATPase alpha/beta chains family. As to quaternary structure, F-type ATPases have 2 components, CF(1) - the catalytic core - and CF(0) - the membrane proton channel. CF(1) has five subunits: alpha(3), beta(3), gamma(1), delta(1), epsilon(1). CF(0) has three main subunits: a(1), b(2) and c(9-12). The alpha and beta chains form an alternating ring which encloses part of the gamma chain. CF(1) is attached to CF(0) by a central stalk formed by the gamma and epsilon chains, while a peripheral stalk is formed by the delta and b chains.

It is found in the cell inner membrane. It catalyses the reaction ATP + H2O + 4 H(+)(in) = ADP + phosphate + 5 H(+)(out). In terms of biological role, produces ATP from ADP in the presence of a proton gradient across the membrane. The alpha chain is a regulatory subunit. The protein is ATP synthase subunit alpha of Thermosipho melanesiensis (strain DSM 12029 / CIP 104789 / BI429).